The following is a 228-amino-acid chain: Orotidine 5'-phosphate decarboxylase (228 aa).

Substrate contacts are provided by residues D10, K33, 60 to 69 (DLKLYDIPHT), T116, R178, Q187, G207, and R208. The Proton donor role is filled by K62.

Belongs to the OMP decarboxylase family. Type 1 subfamily. In terms of assembly, homodimer.

The catalysed reaction is orotidine 5'-phosphate + H(+) = UMP + CO2. It participates in pyrimidine metabolism; UMP biosynthesis via de novo pathway; UMP from orotate: step 2/2. Its function is as follows. Catalyzes the decarboxylation of orotidine 5'-monophosphate (OMP) to uridine 5'-monophosphate (UMP). In Oenococcus oeni (strain ATCC BAA-331 / PSU-1), this protein is Orotidine 5'-phosphate decarboxylase.